We begin with the raw amino-acid sequence, 188 residues long: Small ribosomal subunit protein eS8 (188 aa).

Residues 1 to 34 (MGISRDSRHKRRLTGGRYPVHKKKRKYELGRPSS) are disordered. Residues 7 to 26 (SRHKRRLTGGRYPVHKKKRK) show a composition bias toward basic residues.

The protein belongs to the eukaryotic ribosomal protein eS8 family.

This chain is Small ribosomal subunit protein eS8 (RPS8), found in Theileria parva (East coast fever infection agent).